The chain runs to 229 residues: Potassium/proton antiporter CemA (229 aa).

2 consecutive transmembrane segments (helical) span residues 114 to 134 (IIYF…LIIL) and 189 to 209 (IISG…KYWI).

It belongs to the CemA family.

It is found in the plastid. Its subcellular location is the chloroplast inner membrane. It carries out the reaction K(+)(in) + H(+)(out) = K(+)(out) + H(+)(in). In terms of biological role, contributes to K(+)/H(+) antiport activity by supporting proton efflux to control proton extrusion and homeostasis in chloroplasts in a light-dependent manner to modulate photosynthesis. Prevents excessive induction of non-photochemical quenching (NPQ) under continuous-light conditions. Indirectly promotes efficient inorganic carbon uptake into chloroplasts. The chain is Potassium/proton antiporter CemA from Lotus japonicus (Lotus corniculatus var. japonicus).